A 158-amino-acid chain; its full sequence is Disease resistance response protein Pi49 (158 aa).

This sequence belongs to the BetVI family.

The polypeptide is Disease resistance response protein Pi49 (DRR49A) (Pisum sativum (Garden pea)).